A 365-amino-acid chain; its full sequence is Ribosomal RNA large subunit methyltransferase F (365 aa).

A disordered region spans residues 1–48 (MSKPAVKSVQSATAKTATRAVNIRQKVKAPKQAKPEGKGSTKPVKDRP). Positions 33–48 (AKPEGKGSTKPVKDRP) are enriched in basic and acidic residues.

This sequence belongs to the methyltransferase superfamily. METTL16/RlmF family.

Its subcellular location is the cytoplasm. The enzyme catalyses adenosine(1618) in 23S rRNA + S-adenosyl-L-methionine = N(6)-methyladenosine(1618) in 23S rRNA + S-adenosyl-L-homocysteine + H(+). Functionally, specifically methylates the adenine in position 1618 of 23S rRNA. The protein is Ribosomal RNA large subunit methyltransferase F of Shewanella baltica (strain OS223).